Reading from the N-terminus, the 322-residue chain is Aldo-keto reductase family 1 member C13 (322 aa).

Residues 20-24 and D50 contribute to the NAD(+) site; that span reads GFGTY. The active-site Proton donor is the Y55. H117 serves as a coordination point for substrate. Residues 166–167, Q190, 216–224, and 270–280 each bind NAD(+); these read SN, FGALGTQRY, and QSFYESEMKEN.

It belongs to the aldo/keto reductase family. In terms of assembly, monomer. The N-terminus is blocked.

The catalysed reaction is morphine + NAD(+) = morphinone + NADH + H(+). It carries out the reaction morphine + NADP(+) = morphinone + NADPH + H(+). Strongly inhibited by sulfhydryl reagents and ketamine, but not by pyrazole, barbital and indomethacine. Its function is as follows. Catalyzes the dehydrogenation of morphine to morphinone. The enzyme also exhibits significant activity for a variety of cyclic and alicyclic alcohols. In addition to xenobiotics, the enzyme catalyzes the dehydrogenation of 17-beta-hydroxysteroids with much higher affinities than morphine. Uses both NAD and NADP, but the activity is much greater with NAD than with NADP. The polypeptide is Aldo-keto reductase family 1 member C13 (AKR1C13) (Mesocricetus auratus (Golden hamster)).